We begin with the raw amino-acid sequence, 404 residues long: Chorismate synthase (404 aa).

Arg47 is an NADP(+) binding site. FMN-binding positions include 156–158 (RSS), 281–282 (NA), Gly321, 336–340 (KPTST), and Arg363.

This sequence belongs to the chorismate synthase family. In terms of assembly, homotetramer. FMNH2 is required as a cofactor.

It carries out the reaction 5-O-(1-carboxyvinyl)-3-phosphoshikimate = chorismate + phosphate. The protein operates within metabolic intermediate biosynthesis; chorismate biosynthesis; chorismate from D-erythrose 4-phosphate and phosphoenolpyruvate: step 7/7. Catalyzes the anti-1,4-elimination of the C-3 phosphate and the C-6 proR hydrogen from 5-enolpyruvylshikimate-3-phosphate (EPSP) to yield chorismate, which is the branch point compound that serves as the starting substrate for the three terminal pathways of aromatic amino acid biosynthesis. This reaction introduces a second double bond into the aromatic ring system. The sequence is that of Chorismate synthase from Rhodopirellula baltica (strain DSM 10527 / NCIMB 13988 / SH1).